Reading from the N-terminus, the 286-residue chain is Protease HtpX homolog (286 aa).

2 consecutive transmembrane segments (helical) span residues 7-27 (TFMLMAAITALFIVIGGMIGG) and 29-49 (SGMMLALLFALGMNFFSYWFS). Residue His-131 coordinates Zn(2+). Glu-132 is an active-site residue. Position 135 (His-135) interacts with Zn(2+). The next 2 membrane-spanning stretches (helical) occupy residues 146-166 (ISATMAGAISALANFAVFFGG) and 177-197 (IAGIAVAILAPLAAAMIQMAI). Glu-202 provides a ligand contact to Zn(2+).

The protein belongs to the peptidase M48B family. Requires Zn(2+) as cofactor.

It localises to the cell inner membrane. This Ralstonia pickettii (strain 12J) protein is Protease HtpX homolog.